We begin with the raw amino-acid sequence, 336 residues long: MNLYPWLQHSYKQIIYPHYINKGHHSIILESHKNIGITCLAKHISLWLLCQKKNKSIYHCKTCHSCQLMNSKNHPDWHYFGSNTCLSKNSSKTIGVNEVRNFTNTIFNSAQQGQNKIVYIPNIKKLTEFAINSLLKIIEEPPQNTYFLLINYLPHKIITTLRSRCIIHNLYGPTKENRIEWLKEQNINTNQKIHMSMLYSNEISFISKCKHSLFFLYQERLNFFETLLTSFQEKNFLKMLNVLNNKKCLDQIFIWICGIILDSIKWKHDINTIIINTDQTKIIQILASNFSILSLDNSYKSWIYCYNNIKNIPGINIELLFVKQLLYWEEILNIFN.

In terms of assembly, DNA polymerase III contains a core (composed of alpha, epsilon and theta chains) that associates with a tau subunit. This core dimerizes to form the POLIII' complex. PolIII' associates with the gamma complex (composed of gamma, delta, delta', psi and chi chains) and with the beta chain to form the complete DNA polymerase III complex.

It carries out the reaction DNA(n) + a 2'-deoxyribonucleoside 5'-triphosphate = DNA(n+1) + diphosphate. DNA polymerase III is a complex, multichain enzyme responsible for most of the replicative synthesis in bacteria. This DNA polymerase also exhibits 3' to 5' exonuclease activity. The protein is DNA polymerase III subunit delta' (holB) of Buchnera aphidicola subsp. Baizongia pistaciae (strain Bp).